The sequence spans 130 residues: Albumin-1 C (130 aa).

The first 26 residues, 1-26 (MASVKLASLIVLFATLGMFLTKNVGA), serve as a signal peptide directing secretion. 3 disulfide bridges follow: Cys-29–Cys-46, Cys-33–Cys-48, and Cys-41–Cys-58. 2 consecutive propeptides follow at residues 64 to 69 (VFLRTN) and 123 to 130 (LLKSVSTA).

Post-translationally, the C-terminal glycine may be removed from PA1b. As to expression, major component of both the cotyledons and embryonic axes of mature seeds.

Its function is as follows. PA1b binds to basic 7S globulin (BG) and stimulates its phosphorylation activity. Involved in the signal transduction system to regulate the growth and differentiation as a hormone peptide. Toxic to various insects through binding to a high affinity binding site in the insect gut. The sequence is that of Albumin-1 C from Pisum sativum (Garden pea).